Here is a 149-residue protein sequence, read N- to C-terminus: Calmodulin (149 aa).

Alanine 2 is subject to N-acetylalanine. EF-hand domains follow at residues 8–43 (EQVSEFKEAFSLFDKDGDGQITTKELGTVMRSLGQN), 44–79 (PSESELQDMINEVDADNNGTIDFPEFLTMMARKMKD), 81–116 (DSEEEIREAFKVFDRDNNGFISAAELRHVMTSIGEK), and 117–149 (LTDDEVDEMIREADQDGDGRIDYNEFVQLMMQK). The Ca(2+) site is built by aspartate 21, aspartate 23, aspartate 25, glutamine 27, glutamate 32, aspartate 57, aspartate 59, asparagine 61, threonine 63, glutamate 68, aspartate 94, aspartate 96, asparagine 98, glutamate 105, aspartate 130, aspartate 132, aspartate 134, arginine 136, and glutamate 141.

The protein belongs to the calmodulin family.

Its function is as follows. Calmodulin mediates the control of a large number of enzymes, ion channels and other proteins by Ca(2+). Among the enzymes to be stimulated by the calmodulin-Ca(2+) complex are a number of protein kinases and phosphatases. This is Calmodulin from Colletotrichum gloeosporioides (Anthracnose fungus).